Consider the following 348-residue polypeptide: Anthranilate phosphoribosyltransferase (348 aa).

5-phospho-alpha-D-ribose 1-diphosphate-binding positions include glycine 80, 83-84 (GD), threonine 88, 90-93 (NVST), 108-116 (KHGNRSVSS), and serine 120. Anthranilate is bound at residue glycine 80. Serine 92 serves as a coordination point for Mg(2+). Position 111 (asparagine 111) interacts with anthranilate. Residue arginine 166 participates in anthranilate binding. Mg(2+) is bound by residues aspartate 224 and glutamate 225.

It belongs to the anthranilate phosphoribosyltransferase family. In terms of assembly, homodimer. Requires Mg(2+) as cofactor.

It catalyses the reaction N-(5-phospho-beta-D-ribosyl)anthranilate + diphosphate = 5-phospho-alpha-D-ribose 1-diphosphate + anthranilate. It participates in amino-acid biosynthesis; L-tryptophan biosynthesis; L-tryptophan from chorismate: step 2/5. Catalyzes the transfer of the phosphoribosyl group of 5-phosphorylribose-1-pyrophosphate (PRPP) to anthranilate to yield N-(5'-phosphoribosyl)-anthranilate (PRA). The chain is Anthranilate phosphoribosyltransferase from Sorangium cellulosum (strain So ce56) (Polyangium cellulosum (strain So ce56)).